The primary structure comprises 81 residues: Photosystem I iron-sulfur center (81 aa).

4Fe-4S ferredoxin-type domains follow at residues 2-31 and 39-68; these read AHSV…MIPW and IASA…VRVY. Residues Cys11, Cys14, Cys17, Cys21, Cys48, Cys51, Cys54, and Cys58 each coordinate [4Fe-4S] cluster.

As to quaternary structure, the eukaryotic PSI reaction center is composed of at least 11 subunits. [4Fe-4S] cluster serves as cofactor.

It is found in the plastid. It localises to the chloroplast thylakoid membrane. It carries out the reaction reduced [plastocyanin] + hnu + oxidized [2Fe-2S]-[ferredoxin] = oxidized [plastocyanin] + reduced [2Fe-2S]-[ferredoxin]. Functionally, apoprotein for the two 4Fe-4S centers FA and FB of photosystem I (PSI); essential for photochemical activity. FB is the terminal electron acceptor of PSI, donating electrons to ferredoxin. The C-terminus interacts with PsaA/B/D and helps assemble the protein into the PSI complex. Required for binding of PsaD and PsaE to PSI. PSI is a plastocyanin-ferredoxin oxidoreductase, converting photonic excitation into a charge separation, which transfers an electron from the donor P700 chlorophyll pair to the spectroscopically characterized acceptors A0, A1, FX, FA and FB in turn. The chain is Photosystem I iron-sulfur center from Pinus thunbergii (Japanese black pine).